Reading from the N-terminus, the 265-residue chain is Phosphonates import ATP-binding protein PhnC 1 (265 aa).

Residues 3-247 form the ABC transporter domain; sequence LRLSGIELRH…HLDTLYANEQ (245 aa). 36 to 43 contacts ATP; the sequence is GPSGAGKT. Residues 245–265 are disordered; sequence NEQLSPQPAPDVSETPWTPRC.

Belongs to the ABC transporter superfamily. Phosphonates importer (TC 3.A.1.9.1) family. In terms of assembly, the complex is composed of two ATP-binding proteins (PhnC), two transmembrane proteins (PhnE) and a solute-binding protein (PhnD).

The protein resides in the cell inner membrane. It carries out the reaction phosphonate(out) + ATP + H2O = phosphonate(in) + ADP + phosphate + H(+). Its function is as follows. Part of the ABC transporter complex PhnCDE involved in phosphonates import. Responsible for energy coupling to the transport system. In Pseudomonas savastanoi pv. phaseolicola (strain 1448A / Race 6) (Pseudomonas syringae pv. phaseolicola (strain 1448A / Race 6)), this protein is Phosphonates import ATP-binding protein PhnC 1.